The primary structure comprises 227 residues: 7-cyano-7-deazaguanine synthase (227 aa).

9-19 (LSGGLDSATVL) provides a ligand contact to ATP. Residues Cys189, Cys199, Cys202, and Cys205 each coordinate Zn(2+).

Belongs to the QueC family. It depends on Zn(2+) as a cofactor.

The enzyme catalyses 7-carboxy-7-deazaguanine + NH4(+) + ATP = 7-cyano-7-deazaguanine + ADP + phosphate + H2O + H(+). The protein operates within purine metabolism; 7-cyano-7-deazaguanine biosynthesis. Its function is as follows. Catalyzes the ATP-dependent conversion of 7-carboxy-7-deazaguanine (CDG) to 7-cyano-7-deazaguanine (preQ(0)). The polypeptide is 7-cyano-7-deazaguanine synthase (Cupriavidus taiwanensis (strain DSM 17343 / BCRC 17206 / CCUG 44338 / CIP 107171 / LMG 19424 / R1) (Ralstonia taiwanensis (strain LMG 19424))).